The chain runs to 504 residues: Probable chlorophyll(ide) b reductase NYC1, chloroplastic (504 aa).

The N-terminal 33 residues, 1-33 (MAAAAVVHLSVHGRLRRSPELHARPYHRPSLLR), are a transit peptide targeting the chloroplast. The disordered stretch occupies residues 41–63 (ADNGGEEASSSPPPPTTAEARRR). A run of 2 helical transmembrane segments spans residues 114–134 (YVIT…LSGG) and 141–161 (LIWY…ANSV). 175–199 (ITGSTRGLGKALAREFLLSGDRVVI) is a binding site for NAD(+). Residue Tyr339 is the Proton acceptor of the active site. A helical membrane pass occupies residues 479 to 499 (WVSVFSLSVVCAFIILSSSGG).

This sequence belongs to the short-chain dehydrogenases/reductases (SDR) family. Interacts with NOL to form a complex that acts as a chlorophyll b reductase. As to expression, expressed in leaves and stems. Also detected in non-photosynthetic tissues such as roots.

The protein localises to the plastid. Its subcellular location is the chloroplast thylakoid membrane. The catalysed reaction is 7(1)-hydroxychlorophyllide a + NAD(+) = chlorophyllide b + NADH + H(+). It catalyses the reaction 7(1)-hydroxychlorophyllide a + NADP(+) = chlorophyllide b + NADPH + H(+). In terms of biological role, required for proper chloroplast degradation. Involved in chlorophyll b degradation. The chain is Probable chlorophyll(ide) b reductase NYC1, chloroplastic (NYC1) from Oryza sativa subsp. japonica (Rice).